Consider the following 630-residue polypeptide: Pentatricopeptide repeat-containing protein At1g63130, mitochondrial (630 aa).

The N-terminal 22 residues, 1–22, are a transit peptide targeting the mitochondrion; that stretch reads MRRLFAISSTGNRFVHRSLLGK. PPR repeat units lie at residues 80 to 114, 115 to 149, 150 to 184, 185 to 219, 220 to 254, 255 to 289, 290 to 324, 325 to 359, 360 to 394, 395 to 429, 430 to 464, 465 to 499, 500 to 534, 535 to 569, and 570 to 604; these read SIVE…GISH, NLYT…GYEP, DIVT…GYQP, DSFT…GCQP, DLVT…KIEP, GVVI…GIRP, NVVT…KINP, NVVT…SIDP, DIFT…DCFP, NVVT…GLVG, NTVT…GVLP, DIMT…KMEP, DIYT…GVKP, NVVT…GPLP, and DSGT…RFVG.

This sequence belongs to the PPR family. P subfamily.

Its subcellular location is the mitochondrion. The polypeptide is Pentatricopeptide repeat-containing protein At1g63130, mitochondrial (Arabidopsis thaliana (Mouse-ear cress)).